The following is a 450-amino-acid chain: Magnesium transporter MgtE (450 aa).

Over 1 to 283 (MEEKLAVSLQ…SEAGPVALWL (283 aa)) the chain is Cytoplasmic. Residues Glu59, Asp91, Asp95, and Gly136 each contribute to the Mg(2+) site. CBS domains follow at residues 138-200 (MTPE…RVAE) and 202-258 (MNPK…EATE). The ATP site is built by Tyr170, Ser185, Arg187, Asp188, and Val207. Positions 216, 223, 226, 247, 250, 255, 258, and 259 each coordinate Mg(2+). Glu275 is a binding site for Ca(2+). Glu275, Gln304, Glu307, and Glu311 together coordinate Mn(2+). The helical transmembrane segment at 284 to 306 (ARVRWLVILILTGMVTSSILQGF) threads the bilayer. Residues 307–315 (ESVLEAVTA) are Periplasmic-facing. Glu311 lines the Ca(2+) pocket. A helical transmembrane segment spans residues 316-337 (LAFYVPVLLGTGGNTGNQSATL). Over 338–351 (IIRALATRDLDLRD) the chain is Cytoplasmic. Residues 352–381 (WRRVFLKEMGVGLLLGLTLSFLLVGKVYWD) traverse the membrane as a helical segment. The Periplasmic portion of the chain corresponds to 382–385 (GHPL). His383 is a binding site for Mn(2+). Residues 386–409 (LLPVVGVSLVLIVFFANLVGAMLP) traverse the membrane as a helical segment. Residues 410–420 (FLLRRLGVDPA) lie on the Cytoplasmic side of the membrane. Asp418, Ala428, and Asp432 together coordinate Mg(2+). A helical transmembrane segment spans residues 421-443 (LVSNPLVATLSDVTGLLIYLSVA). The Periplasmic portion of the chain corresponds to 444 to 450 (RLLLEAV).

It belongs to the SLC41A transporter family. In terms of assembly, homodimer.

The protein resides in the cell inner membrane. The enzyme catalyses Mg(2+)(in) = Mg(2+)(out). With respect to regulation, the channel activity is regulated via the N-terminal cytoplasmic region, which acts as a Mg(2+) sensor to regulate the gating of the ion-conducting pore in response to the intracellular magnesium concentration. Under high-intracellular magnesium conditions, binding of magnesium to the N-terminal cytoplasmic domain stabilizes the closed conformation of the channel. Under low-intracellular magnesium conditions, the channel is in equilibrium between the open and closed states. A cation-binding site within the membrane (M1) strictly recognizes the size and geometry of the Mg(2+) hydration shells, which may be important for the selective transport of Mg(2+) over other cations. Cation-binding sites on the periplasmic side (M2 and M3) regulate channel opening and prevent conduction of near-cognate cations. Binding of Mn(2+) to the periplasmic sites strongly inhibits the Mg(2+) transport activity. In addition, activity is regulated by ATP, which binds to MgtE and modulates its Mg(2+)-dependent channel gating. ATP binding enhances the intracellular domain affinity for Mg(2+) within physiological concentrations of this divalent cation, enabling MgtE to function as an in vivo Mg(2+) sensor. ATP dissociation from MgtE upregulates Mg(2+) influx at both high and low intracellular Mg(2+) concentrations. Functionally, highly selective magnesium channel that plays an important role in Mg(2+) homeostasis. Functions as a Mg(2+)-dependent gating channel. Exhibits low activity with cobalt, suggesting that it might also be involved in the uptake of Co(2+) as a micronutrient. Also exhibits low activity with Ca(2+), but it shows almost no activity with Mn(2+). This chain is Magnesium transporter MgtE, found in Thermus thermophilus (strain ATCC 27634 / DSM 579 / HB8).